A 303-amino-acid polypeptide reads, in one-letter code: MTNTTMQPNRLRIALQKKGRLSQDCAILLKQCGVKINWNEQRLIAYAENLPIEILRVRDDDIPGLIFDGVVDLGIIGENVLEEEELGRRAANETVTYKKLRQLDFGDCRLSLAVDRDCHYENVKDLANRRIATSYPYLLKRYMNENGVSFKSCLLNGSVEVAPSAGIAYAICDLVSSGATLEANGLKEVDVIYRSKACLIQRAEPLESTKQALVDKLLTRIQGVQQAAESKYIMLHAPKEKLEKITALLPGVENPTILPLASDTTRVAMHVVSQENLFWETMEQLKEAGASSILVLPIEKMME.

It belongs to the ATP phosphoribosyltransferase family. Long subfamily. Mg(2+) is required as a cofactor.

The protein resides in the cytoplasm. It carries out the reaction 1-(5-phospho-beta-D-ribosyl)-ATP + diphosphate = 5-phospho-alpha-D-ribose 1-diphosphate + ATP. It participates in amino-acid biosynthesis; L-histidine biosynthesis; L-histidine from 5-phospho-alpha-D-ribose 1-diphosphate: step 1/9. Its activity is regulated as follows. Feedback inhibited by histidine. Functionally, catalyzes the condensation of ATP and 5-phosphoribose 1-diphosphate to form N'-(5'-phosphoribosyl)-ATP (PR-ATP). Has a crucial role in the pathway because the rate of histidine biosynthesis seems to be controlled primarily by regulation of HisG enzymatic activity. This is ATP phosphoribosyltransferase from Haemophilus influenzae (strain PittEE).